Reading from the N-terminus, the 511-residue chain is Steroid 17-alpha-hydroxylase/17,20 lyase (511 aa).

Residue C442 participates in heme binding.

The protein belongs to the cytochrome P450 family. It depends on heme as a cofactor.

The protein localises to the endoplasmic reticulum membrane. The protein resides in the microsome membrane. The catalysed reaction is a C21-steroid + reduced [NADPH--hemoprotein reductase] + O2 = a 17alpha-hydroxy-C21-steroid + oxidized [NADPH--hemoprotein reductase] + H2O + H(+). It carries out the reaction progesterone + reduced [NADPH--hemoprotein reductase] + O2 = 17alpha-hydroxyprogesterone + oxidized [NADPH--hemoprotein reductase] + H2O + H(+). The enzyme catalyses pregnenolone + reduced [NADPH--hemoprotein reductase] + O2 = 17alpha-hydroxypregnenolone + oxidized [NADPH--hemoprotein reductase] + H2O + H(+). It catalyses the reaction 17alpha-hydroxyprogesterone + reduced [NADPH--hemoprotein reductase] + O2 = androst-4-ene-3,17-dione + acetate + oxidized [NADPH--hemoprotein reductase] + H2O + 2 H(+). The catalysed reaction is 17alpha-hydroxyprogesterone + reduced [NADPH--hemoprotein reductase] + O2 = 16alpha,17alpha-dihydroxyprogesterone + oxidized [NADPH--hemoprotein reductase] + H2O + H(+). It carries out the reaction 16alpha,17alpha-dihydroxyprogesterone + reduced [NADPH--hemoprotein reductase] + O2 = 6beta,16alpha,17alpha-trihydroxyprogesterone + oxidized [NADPH--hemoprotein reductase] + H2O + H(+). The enzyme catalyses 17alpha-hydroxypregnenolone + reduced [NADPH--hemoprotein reductase] + O2 = 3beta-hydroxyandrost-5-en-17-one + acetate + oxidized [NADPH--hemoprotein reductase] + H2O + 2 H(+). It catalyses the reaction 16alpha,17alpha-dihydroxypregnenolone + reduced [NADPH--hemoprotein reductase] + O2 = 3beta,16alpha-dihydroxy-androst-5-en-17-one + acetate + oxidized [NADPH--hemoprotein reductase] + H2O + 2 H(+). The catalysed reaction is 3beta-hydroxyandrost-5-en-17-one + reduced [NADPH--hemoprotein reductase] + O2 = 3beta,16alpha-dihydroxy-androst-5-en-17-one + oxidized [NADPH--hemoprotein reductase] + H2O + H(+). It carries out the reaction androst-4-ene-3,17-dione + reduced [NADPH--hemoprotein reductase] + O2 = 16alpha-hydroxyandrost-4-ene-3,17-dione + oxidized [NADPH--hemoprotein reductase] + H2O + H(+). It functions in the pathway steroid hormone biosynthesis. It participates in steroid biosynthesis; glucocorticoid biosynthesis. Its activity is regulated as follows. Regulated predominantly by intracellular cAMP levels. The 17,20-lyase activity is stimulated by cytochrome b5, which acts as an allosteric effector increasing the Vmax of the lyase activity. Functionally, a cytochrome P450 monooxygenase involved in corticoid and androgen biosynthesis. Catalyzes 17-alpha hydroxylation of C21 steroids, which is common for both pathways. A second oxidative step, required only for androgen synthesis, involves an acyl-carbon cleavage. The 17-alpha hydroxy intermediates, as part of adrenal glucocorticoids biosynthesis pathway, are precursors of cortisol. Hydroxylates steroid hormones, pregnenolone and progesterone to form 17-alpha hydroxy metabolites, followed by the cleavage of the C17-C20 bond to form C19 steroids, dehydroepiandrosterone (DHEA) and androstenedione. Has 16-alpha hydroxylase activity. Catalyzes 16-alpha hydroxylation of 17-alpha hydroxy pregnenolone, followed by the cleavage of the C17-C20 bond to form 16-alpha-hydroxy DHEA. Also 16-alpha hydroxylates androgens, relevant for estriol synthesis. Mechanistically, uses molecular oxygen inserting one oxygen atom into a substrate, and reducing the second into a water molecule, with two electrons provided by NADPH via cytochrome P450 reductase (CPR; NADPH-ferrihemoprotein reductase). This chain is Steroid 17-alpha-hydroxylase/17,20 lyase (CYP17A1), found in Mesocricetus auratus (Golden hamster).